A 104-amino-acid polypeptide reads, in one-letter code: Cytochrome c-552 (104 aa).

A signal peptide spans 1 to 23 (MHLHLRGICLVLAVASSSSSALA). Heme c is bound by residues C37, C40, H41, and M82.

Belongs to the cytochrome c family. As to quaternary structure, monoheme monomer. Has the tendency to dimerize. In terms of processing, binds 1 heme c group covalently per subunit.

Its subcellular location is the periplasm. This is Cytochrome c-552 (cycB) from Bradyrhizobium diazoefficiens (strain JCM 10833 / BCRC 13528 / IAM 13628 / NBRC 14792 / USDA 110).